The chain runs to 271 residues: uncharacterized protein (271 aa).

The tract at residues 233–261 (VEPDPNRFSEPVDQPTLVEEGKEARRTER) is disordered. Positions 251–261 (EEGKEARRTER) are enriched in basic and acidic residues.

May be involved in swimming motility. This is an uncharacterized protein from Haloferax volcanii (strain ATCC 29605 / DSM 3757 / JCM 8879 / NBRC 14742 / NCIMB 2012 / VKM B-1768 / DS2) (Halobacterium volcanii).